The chain runs to 130 residues: Large ribosomal subunit protein bL19 (130 aa).

This sequence belongs to the bacterial ribosomal protein bL19 family.

Functionally, this protein is located at the 30S-50S ribosomal subunit interface and may play a role in the structure and function of the aminoacyl-tRNA binding site. The protein is Large ribosomal subunit protein bL19 of Cupriavidus taiwanensis (strain DSM 17343 / BCRC 17206 / CCUG 44338 / CIP 107171 / LMG 19424 / R1) (Ralstonia taiwanensis (strain LMG 19424)).